The following is a 3412-amino-acid chain: Genome polyprotein (3412 aa).

Residues 1 to 30 (MAGKAILKGKGGGPPRRVSKETAKKTRQSR) are disordered. Residues 1-98 (MAGKAILKGK…LQRRGKRRSA (98 aa)) lie on the Cytoplasmic side of the membrane. Positions 97–117 (SAVDWTGWLLVVVLLGVTLAA) are cleaved as a propeptide — ER anchor for the capsid protein C, removed in mature form by serine protease NS3. The chain crosses the membrane as a helical span at residues 99–119 (VDWTGWLLVVVLLGVTLAATV). The Extracellular segment spans residues 120-242 (RKERDGTTVI…HLTRVEGWVW (123 aa)). Asn144 carries N-linked (GlcNAc...) asparagine; by host glycosylation. Residues 243–260 (KNKVLTLAVIAVVWLTVE) traverse the membrane as a helical segment. Residue Ser261 is a topological domain, cytoplasmic. A helical membrane pass occupies residues 262-280 (VVTRVAVVVVLLCLAPVYA). The Extracellular segment spans residues 281–727 (SRCTHLENRD…HTVLGGAFNS (447 aa)). 6 disulfide bridges follow: Cys283–Cys310, Cys340–Cys396, Cys340–Cys401, Cys354–Cys385, Cys372–Cys396, and Cys372–Cys401. The interval 378 to 391 (DRGWGNHCGLFGKG) is fusion peptide. Asn434 is a glycosylation site (N-linked (GlcNAc...) asparagine; by host). Intrachain disulfides connect Cys466/Cys570 and Cys587/Cys618. A helical membrane pass occupies residues 728-748 (LFGGVGFLPKILVGVVLAWLG). At 749–755 (LNMRNPT) the chain is on the cytoplasmic side. Residues 756–776 (MSMSFLLAGGLVLAMTLGVGA) traverse the membrane as a helical segment. At 777-1187 (DVGCAVDTER…LVKIESLVRY (411 aa)) the chain is on the extracellular side. Disulfide bonds link Cys780–Cys791, Cys831–Cys920, Cys955–Cys1000, Cys1057–Cys1106, Cys1068–Cys1090, and Cys1089–Cys1093. N-linked (GlcNAc...) asparagine; by host glycosylation is found at Asn861, Asn983, and Asn999. The chain crosses the membrane as a helical span at residues 1188 to 1208 (VVAVGITFHLELGPEIVALTL). The Cytoplasmic portion of the chain corresponds to 1209 to 1236 (LQAVFELRVGLLSAFALRSNLTVREMVT). The chain crosses the membrane as a helical span at residues 1237-1257 (IYFLLLVLELGLPSEGLGALW). Topologically, residues 1258-1293 (KWGDALAMGALIFRACTAEEKTGVGLLLMALMTQQD) are lumenal. The chain crosses the membrane as a helical span at residues 1294–1314 (LATVHYGLMLFLGVASCCSIW). Residues 1315–1327 (KLIRGHREQKGLT) lie on the Cytoplasmic side of the membrane. Residues 1328 to 1348 (WIVPLAGLLGGEGSGVRLVAF) traverse the membrane as a helical segment. At 1349–1359 (WELTVHGRRRS) the chain is on the cytoplasmic side. Residues 1360-1378 (FSEPLTVVGVMLTLASGMI) form a helical membrane-spanning segment. The Lumenal portion of the chain corresponds to 1379–1382 (RHTS). Residues 1383-1403 (QEALCALAVASFLLLMLVLGT) traverse the membrane as a helical segment. Residues 1404–1454 (RKMQLVAEWSGCVEWHPELMNEGGEVSLRVRQDSMGNFHLTELEKEERVMA) are Cytoplasmic-facing. Residues 1410–1449 (AEWSGCVEWHPELMNEGGEVSLRVRQDSMGNFHLTELEKE) are interacts with and activates NS3 protease. The helical intramembrane region spans 1455–1475 (FWLLAGLAASAFHWSGILGVM). Over 1476 to 2160 (GLWTLSEMLR…KMAERDAPEA (685 aa)) the chain is Cytoplasmic. The region spanning 1490 to 1669 (SGLVFSGQGG…EAEKSRPNLP (180 aa)) is the Peptidase S7 domain. Catalysis depends on charge relay system; for serine protease NS3 activity residues His1543, Asp1567, and Ser1627. A Helicase ATP-binding domain is found at 1675–1831 (TGWTAKGQIT…ESNGAISSEE (157 aa)). 1688–1695 (MHPGSGKT) is a binding site for ATP. Positions 1779–1782 (DEAH) match the DEAH box motif. A Helicase C-terminal domain is found at 1841-2000 (DGFDWITEYE…TLRGPVATFY (160 aa)). Lys1883 bears the N6-acetyllysine; by host mark. The helical transmembrane segment at 2161 to 2181 (FLTVVEMMVLGLATLGVVWCF) threads the bilayer. The Lumenal portion of the chain corresponds to 2182 to 2189 (VVRTSISR). The segment at residues 2190–2210 (MMLGTLVLLASLALLWAGGVS) is an intramembrane region (helical). A topological domain (lumenal) is located at residue Tyr2211. Residues 2212 to 2232 (GNMAGVALIFYTLLTVLQPEA) traverse the membrane as a helical segment. At 2233–2244 (GKQRSSDDNKLA) the chain is on the cytoplasmic side. The helical transmembrane segment at 2245–2265 (YFLLTLCSLAGLVAANEMGFL) threads the bilayer. The Lumenal segment spans residues 2266 to 2299 (EKTKADLSTVLWSEHEELRSWEEWTNIDIQPARS). An intramembrane region (helical) is located at residues 2300–2320 (WGTYVLVVSLFTPYIIHQLQT). Residues 2321-2343 (KIQQLVNSAVATGAQAMRDLGGG) lie on the Lumenal side of the membrane. The segment at residues 2344 to 2364 (APFFGVAGHVMALGVVSLVGA) is an intramembrane region (helical). Residues 2365-2368 (TPTS) are Lumenal-facing. A helical membrane pass occupies residues 2369–2389 (LVVGVGLAAFHLAIVVSGLEA). Topologically, residues 2390 to 2430 (ELTQRAHKVFFSAMVRNPMVDGDVINPFGEGEAKPALYERK) are cytoplasmic. Residues 2431–2451 (MSLVLAIVLCLMSVVMNRTVP) traverse the membrane as a helical segment. The Lumenal segment spans residues 2452 to 2476 (STPRLLLWDWRQRDNCSNQRRTPFG). A helical membrane pass occupies residues 2477-2497 (RCQACGLSGVVRGSLWGFCPL). Topologically, residues 2498-3412 (GHRLWLRASG…WESKLESSII (915 aa)) are cytoplasmic. Residues 2511–2775 (GGSEGDTLGD…ELDLGVGTRC (265 aa)) form the mRNA cap 0-1 NS5-type MT domain. Ser2566 lines the S-adenosyl-L-methionine pocket. Ser2566 is subject to Phosphoserine. Lys2571 (for 2'-O-MTase activity) is an active-site residue. Residues Gly2596, Trp2597, Ile2615, Asp2641, and Val2642 each contribute to the S-adenosyl-L-methionine site. Asp2656 (for 2'-O-MTase activity) is an active-site residue. Residue Ile2657 coordinates S-adenosyl-L-methionine. Residues Lys2693 and Glu2729 each act as for 2'-O-MTase activity in the active site. Residues 2729 to 2733 (EMYYS) are interaction with host SCRIB. Tyr2731 lines the S-adenosyl-L-methionine pocket. Residues Glu2948, His2952, Cys2957, and Cys2960 each contribute to the Zn(2+) site. One can recognise a RdRp catalytic domain in the interval 3038–3187 (GLFYADDTAG…RPVDDRFSGA (150 aa)). Residues His3222, Cys3238, and Cys3357 each contribute to the Zn(2+) site.

This sequence in the N-terminal section; belongs to the class I-like SAM-binding methyltransferase superfamily. mRNA cap 0-1 NS5-type methyltransferase family. Homodimer. Interacts (via N-terminus) with host EXOC1 (via C-terminus); this interaction results in EXOC1 degradation through the proteasome degradation pathway. As to quaternary structure, forms heterodimers with envelope protein E in the endoplasmic reticulum and Golgi. In terms of assembly, homodimer; in the endoplasmic reticulum and Golgi. Interacts with protein prM. Interacts with non-structural protein 1. Homodimer; Homohexamer when secreted. Interacts with envelope protein E. As to quaternary structure, interacts (via N-terminus) with serine protease NS3. In terms of assembly, forms a heterodimer with serine protease NS3. May form homooligomers. Forms a heterodimer with NS2B. Interacts with non-structural protein 2A (via N-terminus). Interacts with NS4B. Interacts with unphosphorylated RNA-directed RNA polymerase NS5; this interaction stimulates RNA-directed RNA polymerase NS5 guanylyltransferase activity. As to quaternary structure, interacts with serine protease NS3. Interacts with NS1. In terms of assembly, homodimer. Interacts with host STAT2; this interaction inhibits the phosphorylation of the latter, and, when all viral proteins are present (polyprotein), targets STAT2 for degradation. Interacts with serine protease NS3. Interacts with host SCRIB; this interaction targets NS5 to the cell membrane periphery and nucleus, thereby allowing efficient host nuclear STAT1 inhibition. Specific enzymatic cleavages in vivo yield mature proteins. Cleavages in the lumen of endoplasmic reticulum are performed by host signal peptidase, whereas cleavages in the cytoplasmic side are performed by serine protease NS3. Signal cleavage at the 2K-4B site requires a prior NS3 protease-mediated cleavage at the 4A-2K site. In terms of processing, cleaved in post-Golgi vesicles by a host furin, releasing the mature small envelope protein M, and peptide pr. This cleavage is incomplete as up to 30% of viral particles still carry uncleaved prM. Post-translationally, N-glycosylated. N-glycosylated. The excreted form is glycosylated and this is required for efficient secretion of the protein from infected cells. In terms of processing, acetylated by host KAT5. Acetylation modulates NS3 RNA-binding and unwinding activities and plays an important positive role for viral replication. Post-translationally, phosphorylated on serines residues. This phosphorylation may trigger NS5 nuclear localization.

The protein localises to the virion. The protein resides in the host nucleus. Its subcellular location is the host cytoplasm. It localises to the host perinuclear region. It is found in the secreted. The protein localises to the virion membrane. The protein resides in the host endoplasmic reticulum membrane. The enzyme catalyses Selective hydrolysis of -Xaa-Xaa-|-Yaa- bonds in which each of the Xaa can be either Arg or Lys and Yaa can be either Ser or Ala.. It carries out the reaction RNA(n) + a ribonucleoside 5'-triphosphate = RNA(n+1) + diphosphate. It catalyses the reaction a ribonucleoside 5'-triphosphate + H2O = a ribonucleoside 5'-diphosphate + phosphate + H(+). The catalysed reaction is ATP + H2O = ADP + phosphate + H(+). The enzyme catalyses a 5'-end (5'-triphosphoguanosine)-ribonucleoside in mRNA + S-adenosyl-L-methionine = a 5'-end (N(7)-methyl 5'-triphosphoguanosine)-ribonucleoside in mRNA + S-adenosyl-L-homocysteine. It carries out the reaction a 5'-end (N(7)-methyl 5'-triphosphoguanosine)-ribonucleoside in mRNA + S-adenosyl-L-methionine = a 5'-end (N(7)-methyl 5'-triphosphoguanosine)-(2'-O-methyl-ribonucleoside) in mRNA + S-adenosyl-L-homocysteine + H(+). Plays a role in virus budding by binding to the cell membrane and gathering the viral RNA into a nucleocapsid that forms the core of a mature virus particle. During virus entry, may induce genome penetration into the host cytoplasm after hemifusion induced by the surface proteins. Can migrate to the cell nucleus where it modulates host functions. Functionally, inhibits RNA silencing by interfering with host Dicer. In terms of biological role, prevents premature fusion activity of envelope proteins in trans-Golgi by binding to envelope protein E at pH6.0. After virion release in extracellular space, gets dissociated from E dimers. Its function is as follows. Acts as a chaperone for envelope protein E during intracellular virion assembly by masking and inactivating envelope protein E fusion peptide. prM is the only viral peptide matured by host furin in the trans-Golgi network probably to avoid catastrophic activation of the viral fusion activity in acidic Golgi compartment prior to virion release. prM-E cleavage is inefficient, and many virions are only partially matured. These uncleaved prM would play a role in immune evasion. May play a role in virus budding. Exerts cytotoxic effects by activating a mitochondrial apoptotic pathway through M ectodomain. May display a viroporin activity. Functionally, binds to host cell surface receptor and mediates fusion between viral and cellular membranes. Envelope protein is synthesized in the endoplasmic reticulum in the form of heterodimer with protein prM. They play a role in virion budding in the ER, and the newly formed immature particle is covered with 60 spikes composed of heterodimer between precursor prM and envelope protein E. The virion is transported to the Golgi apparatus where the low pH causes dissociation of PrM-E heterodimers and formation of E homodimers. prM-E cleavage is inefficient, and many virions are only partially matured. These uncleaved prM would play a role in immune evasion. In terms of biological role, involved in immune evasion, pathogenesis and viral replication. Once cleaved off the polyprotein, is targeted to three destinations: the viral replication cycle, the plasma membrane and the extracellular compartment. Essential for viral replication. Required for formation of the replication complex and recruitment of other non-structural proteins to the ER-derived membrane structures. Excreted as a hexameric lipoparticle that plays a role against host immune response. Antagonizing the complement function. Binds to the host macrophages and dendritic cells. Inhibits signal transduction originating from Toll-like receptor 3 (TLR3). Its function is as follows. Component of the viral RNA replication complex that functions in virion assembly and antagonizes the host immune response. Required cofactor for the serine protease function of NS3. May have membrane-destabilizing activity and form viroporins. Functionally, displays three enzymatic activities: serine protease, NTPase and RNA helicase. NS3 serine protease, in association with NS2B, performs its autocleavage and cleaves the polyprotein at dibasic sites in the cytoplasm: C-prM, NS2A-NS2B, NS2B-NS3, NS3-NS4A, NS4A-2K and NS4B-NS5. NS3 RNA helicase binds RNA and unwinds dsRNA in the 3' to 5' direction. In terms of biological role, regulates the ATPase activity of the NS3 helicase activity. NS4A allows NS3 helicase to conserve energy during unwinding. Its function is as follows. Functions as a signal peptide for NS4B and is required for the interferon antagonism activity of the latter. Induces the formation of ER-derived membrane vesicles where the viral replication takes place. Inhibits interferon (IFN)-induced host STAT1 phosphorylation and nuclear translocation, thereby preventing the establishment of cellular antiviral state by blocking the IFN-alpha/beta pathway. Inhibits STAT2 translocation in the nucleus after IFN-alpha treatment. Functionally, replicates the viral (+) and (-) genome, and performs the capping of genomes in the cytoplasm. NS5 methylates viral RNA cap at guanine N-7 and ribose 2'-O positions. Besides its role in RNA genome replication, also prevents the establishment of cellular antiviral state by blocking the interferon-alpha/beta (IFN-alpha/beta) signaling pathway. Inhibits host TYK2 and STAT2 phosphorylation, thereby preventing activation of JAK-STAT signaling pathway. The protein is Genome polyprotein of Homo sapiens (Human).